The chain runs to 560 residues: Formate--tetrahydrofolate ligase (560 aa).

ATP is bound at residue 69-76 (TPAGEGKS).

The protein belongs to the formate--tetrahydrofolate ligase family.

The catalysed reaction is (6S)-5,6,7,8-tetrahydrofolate + formate + ATP = (6R)-10-formyltetrahydrofolate + ADP + phosphate. The protein operates within one-carbon metabolism; tetrahydrofolate interconversion. This chain is Formate--tetrahydrofolate ligase, found in Listeria monocytogenes serovar 1/2a (strain ATCC BAA-679 / EGD-e).